Consider the following 376-residue polypeptide: Sterol 24-C-methyltransferase (376 aa).

The protein belongs to the class I-like SAM-binding methyltransferase superfamily. Erg6/SMT family.

The catalysed reaction is zymosterol + S-adenosyl-L-methionine = fecosterol + S-adenosyl-L-homocysteine + H(+). It participates in steroid metabolism; ergosterol biosynthesis; ergosterol from zymosterol: step 1/5. Substrate analogs 25-azalanosterol and 24(R,S),25-epiminolanosterol act as inhibitors. Sterol 24-C-methyltransferase; part of the third module of ergosterol biosynthesis pathway that includes the late steps of the pathway. ERG6 catalyzes the methyl transfer from S-adenosyl-methionine to the C-24 of zymosterol to form fecosterol. The third module or late pathway involves the ergosterol synthesis itself through consecutive reactions that mainly occur in the endoplasmic reticulum (ER) membrane. Firstly, the squalene synthase ERG9 catalyzes the condensation of 2 farnesyl pyrophosphate moieties to form squalene, which is the precursor of all steroids. Squalene synthase is crucial for balancing the incorporation of farnesyl diphosphate (FPP) into sterol and nonsterol isoprene synthesis. Secondly, the squalene epoxidase ERG1 catalyzes the stereospecific oxidation of squalene to (S)-2,3-epoxysqualene, which is considered to be a rate-limiting enzyme in steroid biosynthesis. Then, the lanosterol synthase ERG7 catalyzes the cyclization of (S)-2,3 oxidosqualene to lanosterol, a reaction that forms the sterol core. In the next steps, lanosterol is transformed to zymosterol through a complex process involving various demethylation, reduction and desaturation reactions. The lanosterol 14-alpha-demethylase ERG11 (also known as CYP51) catalyzes C14-demethylation of lanosterol to produce 4,4'-dimethyl cholesta-8,14,24-triene-3-beta-ol, which is critical for ergosterol biosynthesis. The C-14 reductase ERG24 reduces the C14=C15 double bond of 4,4-dimethyl-cholesta-8,14,24-trienol to produce 4,4-dimethyl-cholesta-8,24-dienol. 4,4-dimethyl-cholesta-8,24-dienol is substrate of the C-4 demethylation complex ERG25-ERG26-ERG27 in which ERG25 catalyzes the three-step monooxygenation required for the demethylation of 4,4-dimethyl and 4alpha-methylsterols, ERG26 catalyzes the oxidative decarboxylation that results in a reduction of the 3-beta-hydroxy group at the C-3 carbon to an oxo group, and ERG27 is responsible for the reduction of the keto group on the C-3. ERG28 has a role as a scaffold to help anchor ERG25, ERG26 and ERG27 to the endoplasmic reticulum and ERG29 regulates the activity of the iron-containing C4-methylsterol oxidase ERG25. Then, the sterol 24-C-methyltransferase ERG6 catalyzes the methyl transfer from S-adenosyl-methionine to the C-24 of zymosterol to form fecosterol. The C-8 sterol isomerase ERG2 catalyzes the reaction which results in unsaturation at C-7 in the B ring of sterols and thus converts fecosterol to episterol. The sterol-C5-desaturase ERG3 then catalyzes the introduction of a C-5 double bond in the B ring to produce 5-dehydroepisterol. The C-22 sterol desaturase ERG5 further converts 5-dehydroepisterol into ergosta-5,7,22,24(28)-tetraen-3beta-ol by forming the C-22(23) double bond in the sterol side chain. Finally, ergosta-5,7,22,24(28)-tetraen-3beta-ol is substrate of the C-24(28) sterol reductase ERG4 to produce ergosterol. The chain is Sterol 24-C-methyltransferase from Candida albicans (strain SC5314 / ATCC MYA-2876) (Yeast).